An 83-amino-acid chain; its full sequence is Large ribosomal subunit protein eL31 (83 aa).

This sequence belongs to the eukaryotic ribosomal protein eL31 family.

This chain is Large ribosomal subunit protein eL31, found in Methanococcus aeolicus (strain ATCC BAA-1280 / DSM 17508 / OCM 812 / Nankai-3).